A 419-amino-acid polypeptide reads, in one-letter code: Gamma-glutamyl phosphate reductase (419 aa).

The protein belongs to the gamma-glutamyl phosphate reductase family.

The protein localises to the cytoplasm. It carries out the reaction L-glutamate 5-semialdehyde + phosphate + NADP(+) = L-glutamyl 5-phosphate + NADPH + H(+). It functions in the pathway amino-acid biosynthesis; L-proline biosynthesis; L-glutamate 5-semialdehyde from L-glutamate: step 2/2. Functionally, catalyzes the NADPH-dependent reduction of L-glutamate 5-phosphate into L-glutamate 5-semialdehyde and phosphate. The product spontaneously undergoes cyclization to form 1-pyrroline-5-carboxylate. This is Gamma-glutamyl phosphate reductase from Caldicellulosiruptor saccharolyticus (strain ATCC 43494 / DSM 8903 / Tp8T 6331).